Here is a 192-residue protein sequence, read N- to C-terminus: Putative acetyltransferase SH0499 (192 aa).

Belongs to the transferase hexapeptide repeat family.

The chain is Putative acetyltransferase SH0499 from Staphylococcus haemolyticus (strain JCSC1435).